A 25-amino-acid polypeptide reads, in one-letter code: Ribosome-inactivating protein charantin (25 aa).

Monomer.

The catalysed reaction is Endohydrolysis of the N-glycosidic bond at one specific adenosine on the 28S rRNA.. Its function is as follows. Inhibits cell-free translation in a rabbit reticulocyte lysate system. In Momordica charantia (Bitter gourd), this protein is Ribosome-inactivating protein charantin.